The sequence spans 218 residues: N-(5'-phosphoribosyl)anthranilate isomerase (218 aa).

Belongs to the TrpF family.

It carries out the reaction N-(5-phospho-beta-D-ribosyl)anthranilate = 1-(2-carboxyphenylamino)-1-deoxy-D-ribulose 5-phosphate. The protein operates within amino-acid biosynthesis; L-tryptophan biosynthesis; L-tryptophan from chorismate: step 3/5. The sequence is that of N-(5'-phosphoribosyl)anthranilate isomerase from Bordetella pertussis (strain Tohama I / ATCC BAA-589 / NCTC 13251).